Consider the following 428-residue polypeptide: Histidinol dehydrogenase (428 aa).

Positions 125, 187, and 210 each coordinate NAD(+). Substrate contacts are provided by S234, Q256, and H259. Zn(2+) contacts are provided by Q256 and H259. Residues E323 and H324 each act as proton acceptor in the active site. Substrate-binding residues include H324, D357, E411, and H416. A Zn(2+)-binding site is contributed by D357. H416 lines the Zn(2+) pocket.

This sequence belongs to the histidinol dehydrogenase family. It depends on Zn(2+) as a cofactor.

The catalysed reaction is L-histidinol + 2 NAD(+) + H2O = L-histidine + 2 NADH + 3 H(+). It participates in amino-acid biosynthesis; L-histidine biosynthesis; L-histidine from 5-phospho-alpha-D-ribose 1-diphosphate: step 9/9. Functionally, catalyzes the sequential NAD-dependent oxidations of L-histidinol to L-histidinaldehyde and then to L-histidine. The sequence is that of Histidinol dehydrogenase from Bacteroides thetaiotaomicron (strain ATCC 29148 / DSM 2079 / JCM 5827 / CCUG 10774 / NCTC 10582 / VPI-5482 / E50).